Reading from the N-terminus, the 319-residue chain is Ester hydrolase C11orf54 homolog (319 aa).

Residues H270, H272, and H282 each contribute to the Zn(2+) site.

In terms of assembly, monomer. Zn(2+) serves as cofactor.

The protein resides in the nucleus. Its subcellular location is the cytoplasm. Its function is as follows. Exhibits ester hydrolase activity on the substrate p-nitrophenyl acetate, in vitro. May regulate DNA damage and repair by regulating HIF1A degradation via chaperone-mediated autophagy (CMA). The polypeptide is Ester hydrolase C11orf54 homolog (Danio rerio (Zebrafish)).